The primary structure comprises 287 residues: Taxis protein CheF2 (287 aa).

In terms of assembly, interacts with chemotaxis (Che) proteins as well as flagella accessory (Fla) proteins.

Involved in taxis signal transduction. The chain is Taxis protein CheF2 (cheF2) from Halobacterium salinarum (strain ATCC 29341 / DSM 671 / R1).